We begin with the raw amino-acid sequence, 1253 residues long: Cytoplasmic FMR1-interacting protein 1 homolog (1253 aa).

Belongs to the CYFIP family.

The protein localises to the cytoplasm. It localises to the perinuclear region. It is found in the cell projection. Its subcellular location is the lamellipodium. The protein resides in the ruffle. The protein localises to the synapse. It localises to the synaptosome. Its function is as follows. Involved in formation of membrane ruffles and lamellipodia protrusions and in axon outgrowth. Binds to F-actin but not to RNA. The polypeptide is Cytoplasmic FMR1-interacting protein 1 homolog (Danio rerio (Zebrafish)).